Reading from the N-terminus, the 62-residue chain is Large ribosomal subunit protein uL29 (62 aa).

Belongs to the universal ribosomal protein uL29 family.

The protein is Large ribosomal subunit protein uL29 of Chromobacterium violaceum (strain ATCC 12472 / DSM 30191 / JCM 1249 / CCUG 213 / NBRC 12614 / NCIMB 9131 / NCTC 9757 / MK).